The primary structure comprises 561 residues: Putative transport protein ASA_2308 (561 aa).

5 consecutive transmembrane segments (helical) span residues 8–28 (LLHQ…LLLG), 37–57 (IGNT…GFEF), 66–86 (FMLF…SVFL), 90–110 (IHYI…TVGL), and 161–181 (NMGI…MLVV). RCK C-terminal domains lie at 206–291 (SDNE…NYRN) and 293–376 (KEVF…KIGF). The next 5 helical transmembrane spans lie at 386–406 (LVAF…SLVF), 409–429 (LEFG…MGYL), 450–470 (LGLA…ILDH), 476–496 (AVVL…GYLF), and 541–561 (TYAV…GFWF).

This sequence belongs to the AAE transporter (TC 2.A.81) family. YbjL subfamily.

The protein localises to the cell membrane. This is Putative transport protein ASA_2308 from Aeromonas salmonicida (strain A449).